The chain runs to 424 residues: Histidine--tRNA ligase (424 aa).

Belongs to the class-II aminoacyl-tRNA synthetase family. Homodimer.

The protein resides in the cytoplasm. It catalyses the reaction tRNA(His) + L-histidine + ATP = L-histidyl-tRNA(His) + AMP + diphosphate + H(+). The sequence is that of Histidine--tRNA ligase from Shigella dysenteriae serotype 1 (strain Sd197).